We begin with the raw amino-acid sequence, 360 residues long: Peptide chain release factor 1 (360 aa).

At Gln235 the chain carries N5-methylglutamine. Positions 284-313 (AKRQQAEASTRRNLLGSGDRSDRNRTYNFP) are disordered.

It belongs to the prokaryotic/mitochondrial release factor family. Methylated by PrmC. Methylation increases the termination efficiency of RF1.

Its subcellular location is the cytoplasm. Peptide chain release factor 1 directs the termination of translation in response to the peptide chain termination codons UAG and UAA. In Salmonella schwarzengrund (strain CVM19633), this protein is Peptide chain release factor 1.